We begin with the raw amino-acid sequence, 463 residues long: ATP-dependent protease ATPase subunit HslU (463 aa).

Residues Ile19, 61-66 (GVGKTE), Asp277, Glu341, and Arg413 contribute to the ATP site.

The protein belongs to the ClpX chaperone family. HslU subfamily. In terms of assembly, a double ring-shaped homohexamer of HslV is capped on each side by a ring-shaped HslU homohexamer. The assembly of the HslU/HslV complex is dependent on binding of ATP.

It is found in the cytoplasm. ATPase subunit of a proteasome-like degradation complex; this subunit has chaperone activity. The binding of ATP and its subsequent hydrolysis by HslU are essential for unfolding of protein substrates subsequently hydrolyzed by HslV. HslU recognizes the N-terminal part of its protein substrates and unfolds these before they are guided to HslV for hydrolysis. This chain is ATP-dependent protease ATPase subunit HslU, found in Bacillus cytotoxicus (strain DSM 22905 / CIP 110041 / 391-98 / NVH 391-98).